Here is a 318-residue protein sequence, read N- to C-terminus: tRNA uridine(34) hydroxylase (318 aa).

Positions 125-219 (QDPNTVVIDA…YGTSKDTEGK (95 aa)) constitute a Rhodanese domain. The active-site Cysteine persulfide intermediate is the cysteine 179.

The protein belongs to the TrhO family.

The enzyme catalyses uridine(34) in tRNA + AH2 + O2 = 5-hydroxyuridine(34) in tRNA + A + H2O. Its function is as follows. Catalyzes oxygen-dependent 5-hydroxyuridine (ho5U) modification at position 34 in tRNAs. The chain is tRNA uridine(34) hydroxylase from Acholeplasma laidlawii (strain PG-8A).